We begin with the raw amino-acid sequence, 1153 residues long: MDGAVRLDWTGLDLTGHEIHDGVPIASRVQVMVSFPLFKDQHIIMSSKESPSRKSSTIGQSTRNGSCQADTQKGQLPPVGEKPKPVKENPMKKLKEMSQRPLPTQHGDGTYPTEKKLTGIGEDLKHIRGYDVKTLLAMVKSKLKGEKLKDDKTMLMERVMQLVARLPTESKKRAELTDSLINELWESLDHPPLNYLGPEHSYRTPDGSYNHPFNPQLGAAGSRYARSVIPTVTPPGALPDPGLIFDSIMGRTPNSYRKHPNNVSSILWYWATIIIHDIFWTDPRDINTNKSSSYLDLAPLYGNSQEMQDSIRTFKDGRMKPDCYADKRLAGMPPGVSVLLIMFNRFHNHVAENLALINEGGRFNKPSDLLEGEAREAAWKKYDNDLFQVARLVTSGLYINITLVDYVRNIVNLNRVDTTWTLDPRQDAGAHVGTADGAERGTGNAVSAEFNLCYRWHSCISEKDSKFVEAQFQNIFGKPASEVRPDEMWKGFAKMEQNTPADPGQRTFGGFKRGPDGKFDDDDLVRCISEAVEDVAGAFGARNVPQAMKVVETMGIIQGRKWNVAGLNEFRKHFHLKPYSTFEDINSDPGVAEALRRLYDHPDNVELYPGLVAEEDKQPMVPGVGIAPTYTISRVVLSDAVCLVRGDRFYTTDFTPRNLTNWGYKEVDYDLSVNHGCVFYKLFIRAFPNHFKQNSVYAHYPMVVPSENKRILEALGRADLFDFEAPKYIPPRVNITSYGGAEYILETQEKYKVTWHEGLGFLMGEGGLKFMLSGDDPLHAQQRKCMAAQLYKDGWTEAVKAFYAGMMEELLVSKSYFLGNNKHRHVDIIRDVGNMVHVHFASQVFGLPLKTAKNPTGVFTEQEMYGILAAIFTTIFFDLDPSKSFPLRTKTREVCQKLAKLVEANVKLINKIPWSRGMFVGKPAKDEPLSIYGKTMIKGLKAHGLSDYDIAWSHVVPTSGAMVPNQAQVFAQAVDYYLSPAGMHYIPEIHMVALQPSTPETDALLLGYAMEGIRLAGTFGSYREAAVDDVVKEDNGRQVPVKAGDRVFVSFVDAARDPKHFPDPEVVNPRRPAKKYIHYGVGPHACLGRDASQIAITEMFRCLFRRRNVRRVPGPQGELKKVPRPGGFYVYMREDWGGLFPFPVTMRVMWDDE.

Residues 46–56 (SSKESPSRKSS) are compositionally biased toward low complexity. A disordered region spans residues 46–113 (SSKESPSRKS…TQHGDGTYPT (68 aa)). Residues 57-74 (TIGQSTRNGSCQADTQKG) show a composition bias toward polar residues. Over residues 81–98 (EKPKPVKENPMKKLKEMS) the composition is skewed to basic and acidic residues. A fatty acid alpha-dioxygenase region spans residues 177–525 (TDSLINELWE…DGKFDDDDLV (349 aa)). His276 lines the heme b pocket. The active site involves Tyr454. Position 457 (His457) interacts with heme b. The interval 732–1153 (RVNITSYGGA…VTMRVMWDDE (422 aa)) is epoxy alcohol synthase. Position 1086 (Cys1086) interacts with heme.

This sequence in the N-terminal section; belongs to the peroxidase family. It in the C-terminal section; belongs to the cytochrome P450 family. In terms of assembly, homotetramer. Heme b serves as cofactor. It depends on heme as a cofactor.

It carries out the reaction (9Z)-octadecenoate + O2 = (8R)-hydroperoxy-(9Z)-octadecenoate. The enzyme catalyses (9Z)-octadecenoate + O2 = 10-hydroperoxy-(8E)-octadecenoate. It catalyses the reaction (9Z,12Z)-octadecadienoate + O2 = (8E,10R,12Z)-10-hydroperoxyoctadeca-8,12-dienoate. The catalysed reaction is (9Z,12Z,15Z)-octadecatrienoate + O2 = (10R)-hydroperoxy-(8E,12Z,15Z)-octadecatrienoate. It carries out the reaction (9Z,12Z,15Z)-octadecatrienoate + O2 = (8R)-hydroperoxy-(9Z,12Z,15Z)-octadecatrienoate. The enzyme catalyses (11Z,14Z)-eicosadienoate + O2 = 12-hydroperoxy-(10E,14Z)-eicosadienoate. It catalyses the reaction (11Z,14Z,17Z)-eicosatrienoate + O2 = 12-hydroperoxy-(10E,14Z,17Z)-eicosatrienoate. The catalysed reaction is (12R,13S)-epoxy-(9Z)-octadecenoate + O2 = (12R,13S)-epoxy-(10R)-hydroperoxy-(8E)-octadecenoate. It carries out the reaction (8E,10R,12Z)-10-hydroperoxyoctadeca-8,12-dienoate = (12S,13R)-epoxy-(10R)-hydroxy-(8E)-octadecenoate. The enzyme catalyses (10R)-hydroperoxy-(8E,12Z,15Z)-octadecatrienoate = 12,13-epoxy-(10R)-hydroxy-(8E,15Z)-octadecadienoate. It catalyses the reaction 12-hydroperoxy-(10E,14Z)-eicosadienoate = 10,11-epoxy-12-hydroxy-(14Z)-eicosenoate. The catalysed reaction is 12-hydroperoxy-(10E,14Z,17Z)-eicosatrienoate = 14,15-epoxy-12-hydroxy-(10E,17Z)-eicosadienoate. It carries out the reaction (13R)-hydroperoxy-(9Z,11E)-octadecadienoate = (12R,13R)-epoxy-(11S)-hydroxy-(9Z)-octadecenoate. The enzyme catalyses (13S)-hydroperoxy-(9Z,11E)-octadecadienoate = (12R,13R)-epoxy-(11S)-hydroxy-(9Z)-octadecenoate. It catalyses the reaction 12-hydroperoxy-(10E,14Z)-eicosadienoate = 14,15-epoxy-12-hydroxy-(10E)-eicosenoate. The catalysed reaction is 12-hydroperoxy-(10E,14Z,17Z)-eicosatrienoate = 10,11-epoxy-12-hydroxy-(14Z,17Z)-eicosadienoate. In terms of biological role, bifunctional dioxygenase (DOX)-epoxy alcohol synthase (EAS) that converts linoleic acid (18:2n-6) sequentially to 10(R)-hydroperoxy-8(E),12(Z)-octadecadienoic acid (10R-HPODE) and 10R-HPODE further to 12 S(13R)-epoxy-10(R)-hydroxy-8(E)-octadecenoic acid as the end product. Oxygenation at C-10 occurs by retention of the pro-R hydrogen of C-8 of 18:2n-6, suggesting antarafacial hydrogen abstraction and oxygenation. The epoxy alcohol is formed from 10R-HPODE, likely by heterolytic cleavage of the dioxygen bond and subsequent intramolecular epoxidation of the 12(Z) double bond. The DOX domain is also able to oxygenate position C-8 of linoleic acid to produce 8(R)-hydroperoxy-8(E),12(Z)-octadecadienoic acid (8R-HPODE). Moreover, the DOX domain can oxygenate alpha-linolenic acid (18:3n-3) at C-8 or C-10 to produce respectively 8HOTrE and 10HOTrE, oleic acid (18:1n-9) at C-8 or C-10 to produce respectively 8-H(P)OME and 10-H(P)OME (with 8R stereoisomer to over 95%), eicosadienoic acid (20:2n-6) at C-10 or C-12 to produce respectively 10(11)-epoxy-12-hydroxy-14(Z)-eicosenoic acid and 14(15)-epoxy-12-hydroxy-10(E)-eicosenoic acid, as well as eicosatrienoic acid (20:3n-3) at C-10 or C-12 to produce respectively 10(11)-epoxy-12-hydroxy-14(Z),17(Z)-eicosadienoic acid and 14(15)-epoxy-12-hydroxy-14(Z),17(Z)-eicosadienoic acid. On the other side, the enzyme EAS domain can also catalyze the conversion of 10HOTrE into 12(13)-epoxy-10(R)-hydroxy-8(E),15(Z)-octadecadienoic acid, 13-R-HPODE into the stereoisomers of 12(13)-epoxy-11-hydroxy-9(Z)-octadecenoic acids (erythro/threo, 1:4), as well as 13S-HPODE into the stereoisomers of 12(13)-epoxy-11-hydroxy-9(Z)-octadecenoic acids (erythro/threo, 1:4) (EAS activity). Gamma-linolenic acid (18:3n-6) is not a substrate. The protein is Bifunctional dioxygenase (DOX)-epoxy alcohol synthase (EAS) of Pyricularia oryzae (strain 70-15 / ATCC MYA-4617 / FGSC 8958) (Rice blast fungus).